A 242-amino-acid chain; its full sequence is Ubiquinone biosynthesis O-methyltransferase (242 aa).

Residues Arg-44, Gly-64, Asp-85, and Met-129 each contribute to the S-adenosyl-L-methionine site.

Belongs to the methyltransferase superfamily. UbiG/COQ3 family.

The enzyme catalyses a 3-demethylubiquinol + S-adenosyl-L-methionine = a ubiquinol + S-adenosyl-L-homocysteine + H(+). It catalyses the reaction a 3-(all-trans-polyprenyl)benzene-1,2-diol + S-adenosyl-L-methionine = a 2-methoxy-6-(all-trans-polyprenyl)phenol + S-adenosyl-L-homocysteine + H(+). It functions in the pathway cofactor biosynthesis; ubiquinone biosynthesis. Its function is as follows. O-methyltransferase that catalyzes the 2 O-methylation steps in the ubiquinone biosynthetic pathway. The protein is Ubiquinone biosynthesis O-methyltransferase of Citrobacter koseri (strain ATCC BAA-895 / CDC 4225-83 / SGSC4696).